The following is a 474-amino-acid chain: Glutamate--tRNA ligase (474 aa).

The short motif at 9 to 19 (PSPTGYLHVGG) is the 'HIGH' region element. Residues 240–244 (KLSKR) carry the 'KMSKS' region motif. K243 lines the ATP pocket.

The protein belongs to the class-I aminoacyl-tRNA synthetase family. Glutamate--tRNA ligase type 1 subfamily. Monomer.

Its subcellular location is the cytoplasm. The enzyme catalyses tRNA(Glu) + L-glutamate + ATP = L-glutamyl-tRNA(Glu) + AMP + diphosphate. Catalyzes the attachment of glutamate to tRNA(Glu) in a two-step reaction: glutamate is first activated by ATP to form Glu-AMP and then transferred to the acceptor end of tRNA(Glu). The polypeptide is Glutamate--tRNA ligase (Aliivibrio fischeri (strain ATCC 700601 / ES114) (Vibrio fischeri)).